A 744-amino-acid chain; its full sequence is 1,4-alpha-glucan branching enzyme GlgB (744 aa).

Catalysis depends on Asp-415, which acts as the Nucleophile. Glu-468 acts as the Proton donor in catalysis.

The protein belongs to the glycosyl hydrolase 13 family. GlgB subfamily. As to quaternary structure, monomer.

It carries out the reaction Transfers a segment of a (1-&gt;4)-alpha-D-glucan chain to a primary hydroxy group in a similar glucan chain.. It participates in glycan biosynthesis; glycogen biosynthesis. Catalyzes the formation of the alpha-1,6-glucosidic linkages in glycogen by scission of a 1,4-alpha-linked oligosaccharide from growing alpha-1,4-glucan chains and the subsequent attachment of the oligosaccharide to the alpha-1,6 position. This Shewanella frigidimarina (strain NCIMB 400) protein is 1,4-alpha-glucan branching enzyme GlgB.